The chain runs to 854 residues: DNA mismatch repair protein MutS (854 aa).

Residues 1–21 are disordered; that stretch reads MTASDIQPTEPHTPPTPHADT. 658–665 provides a ligand contact to ATP; it reads GPNASGKS.

Belongs to the DNA mismatch repair MutS family.

In terms of biological role, this protein is involved in the repair of mismatches in DNA. It is possible that it carries out the mismatch recognition step. This protein has a weak ATPase activity. The sequence is that of DNA mismatch repair protein MutS from Trichormus variabilis (strain ATCC 29413 / PCC 7937) (Anabaena variabilis).